A 105-amino-acid polypeptide reads, in one-letter code: Nucleoid-associated protein MXAN_1931 (105 aa).

The protein belongs to the YbaB/EbfC family. As to quaternary structure, homodimer.

The protein localises to the cytoplasm. It localises to the nucleoid. Binds to DNA and alters its conformation. May be involved in regulation of gene expression, nucleoid organization and DNA protection. This chain is Nucleoid-associated protein MXAN_1931, found in Myxococcus xanthus (strain DK1622).